The following is a 432-amino-acid chain: Nuclear pore complex-interacting protein family member B8 (432 aa).

Disordered regions lie at residues 260-280 and 353-420; these read RMGR…NSLS and SPLP…LRTR. A compositionally biased stretch (polar residues) spans 270 to 280; that stretch reads QQHSITDNSLS. Residues 374-402 are compositionally biased toward basic and acidic residues; the sequence is EVEKPPKPKRWRVDEVEQSPKPKRQREAE. Basic residues predominate over residues 408 to 420; sequence KPKRRRLSKLRTR.

This sequence belongs to the NPIP family.

The sequence is that of Nuclear pore complex-interacting protein family member B8 (NPIPB8) from Homo sapiens (Human).